A 140-amino-acid chain; its full sequence is Nucleoside diphosphate kinase (140 aa).

ATP is bound by residues Lys-11, Phe-59, Arg-87, Thr-93, Arg-104, and Asn-114. The active-site Pros-phosphohistidine intermediate is the His-117.

It belongs to the NDK family. As to quaternary structure, homotetramer. Mg(2+) serves as cofactor.

Its subcellular location is the cytoplasm. The catalysed reaction is a 2'-deoxyribonucleoside 5'-diphosphate + ATP = a 2'-deoxyribonucleoside 5'-triphosphate + ADP. The enzyme catalyses a ribonucleoside 5'-diphosphate + ATP = a ribonucleoside 5'-triphosphate + ADP. In terms of biological role, major role in the synthesis of nucleoside triphosphates other than ATP. The ATP gamma phosphate is transferred to the NDP beta phosphate via a ping-pong mechanism, using a phosphorylated active-site intermediate. This is Nucleoside diphosphate kinase from Acidiphilium cryptum (strain JF-5).